The following is a 114-amino-acid chain: Replication initiation control protein YabA (114 aa).

4 residues coordinate Zn(2+): His79, Cys81, Cys95, and Cys98.

This sequence belongs to the YabA family. Homotetramer. Interacts with both DnaA and DnaN, acting as a bridge between these two proteins. Requires Zn(2+) as cofactor.

The protein localises to the cytoplasm. Its subcellular location is the nucleoid. Involved in control of chromosome replication initiation. Inhibits the cooperative binding of DnaA to the oriC region, thus negatively regulating initiation of chromosome replication. Inhibits the ability of DnaA-ATP to form a helix on DNA; does not disassemble preformed DnaA-DNA helices. Decreases the residence time of DnaA on the chromosome at its binding sites (oriC, replication forks and promoter-binding sites). Tethers DnaA to the replication machinery via the DNA polymerase beta sliding clamp subunit (dnaN). Associates with oriC and other DnaA targets on the chromosome in a DnaA-dependent manner. This Lactobacillus gasseri (strain ATCC 33323 / DSM 20243 / BCRC 14619 / CIP 102991 / JCM 1131 / KCTC 3163 / NCIMB 11718 / NCTC 13722 / AM63) protein is Replication initiation control protein YabA.